A 273-amino-acid chain; its full sequence is NADPH-dependent 7-cyano-7-deazaguanine reductase (273 aa).

80–82 is a binding site for substrate; sequence VES. 82–83 contacts NADPH; it reads SK. Catalysis depends on C180, which acts as the Thioimide intermediate. Residue D187 is the Proton donor of the active site. 219 to 220 contacts substrate; it reads HE. 248-249 provides a ligand contact to NADPH; the sequence is RG.

This sequence belongs to the GTP cyclohydrolase I family. QueF type 2 subfamily. Homodimer.

The protein resides in the cytoplasm. It carries out the reaction 7-aminomethyl-7-carbaguanine + 2 NADP(+) = 7-cyano-7-deazaguanine + 2 NADPH + 3 H(+). It participates in tRNA modification; tRNA-queuosine biosynthesis. Its function is as follows. Catalyzes the NADPH-dependent reduction of 7-cyano-7-deazaguanine (preQ0) to 7-aminomethyl-7-deazaguanine (preQ1). In Bordetella parapertussis (strain 12822 / ATCC BAA-587 / NCTC 13253), this protein is NADPH-dependent 7-cyano-7-deazaguanine reductase.